Consider the following 271-residue polypeptide: MPELPEVETTRRGILPHLEGKRVKAVSVRNRSLRWPIPADLAQQIQNKTLRTIHRRGKYLLLEFANGHVIWHLGMSGSLRIIKADEPPMVHDHVDIAFGGNLALRYTDPRRFGAVLWTNEAILEHKLLNHLGPEPLTDAFNSAYLFDKSRKRSQSVKTWIMDSKVVVGVGNIYANEALFNSAIHPLKAAGKLSQKQCDIFCSEIKSVLAKAIEQGGTTLRDFVGGDGKPGYFAQELNVYGRGGKACKKCRKPLTEKKLGQRTTVYCTHCQK.

The active-site Schiff-base intermediate with DNA is the Pro-2. Residue Glu-3 is the Proton donor of the active site. The active-site Proton donor; for beta-elimination activity is Lys-58. DNA contacts are provided by His-91, Arg-110, and Arg-152. The segment at Asn-237 to Lys-271 adopts an FPG-type zinc-finger fold. Arg-261 acts as the Proton donor; for delta-elimination activity in catalysis.

It belongs to the FPG family. As to quaternary structure, monomer. Zn(2+) serves as cofactor.

The catalysed reaction is Hydrolysis of DNA containing ring-opened 7-methylguanine residues, releasing 2,6-diamino-4-hydroxy-5-(N-methyl)formamidopyrimidine.. The enzyme catalyses 2'-deoxyribonucleotide-(2'-deoxyribose 5'-phosphate)-2'-deoxyribonucleotide-DNA = a 3'-end 2'-deoxyribonucleotide-(2,3-dehydro-2,3-deoxyribose 5'-phosphate)-DNA + a 5'-end 5'-phospho-2'-deoxyribonucleoside-DNA + H(+). Functionally, involved in base excision repair of DNA damaged by oxidation or by mutagenic agents. Acts as a DNA glycosylase that recognizes and removes damaged bases. Has a preference for oxidized purines, such as 7,8-dihydro-8-oxoguanine (8-oxoG). Has AP (apurinic/apyrimidinic) lyase activity and introduces nicks in the DNA strand. Cleaves the DNA backbone by beta-delta elimination to generate a single-strand break at the site of the removed base with both 3'- and 5'-phosphates. The protein is Formamidopyrimidine-DNA glycosylase of Saccharophagus degradans (strain 2-40 / ATCC 43961 / DSM 17024).